We begin with the raw amino-acid sequence, 383 residues long: tRNA-specific 2-thiouridylase MnmA (383 aa).

Residues 10-17 (AMSGGVDS) and Met-36 each bind ATP. Cys-107 serves as the catalytic Nucleophile. Residues Cys-107 and Cys-206 are joined by a disulfide bond. Gly-131 is a binding site for ATP. The interaction with tRNA stretch occupies residues 155–157 (KDQ). The Cysteine persulfide intermediate role is filled by Cys-206. The segment at 315-316 (RY) is interaction with tRNA.

This sequence belongs to the MnmA/TRMU family.

Its subcellular location is the cytoplasm. It carries out the reaction S-sulfanyl-L-cysteinyl-[protein] + uridine(34) in tRNA + AH2 + ATP = 2-thiouridine(34) in tRNA + L-cysteinyl-[protein] + A + AMP + diphosphate + H(+). In terms of biological role, catalyzes the 2-thiolation of uridine at the wobble position (U34) of tRNA, leading to the formation of s(2)U34. The protein is tRNA-specific 2-thiouridylase MnmA of Salinibacter ruber (strain DSM 13855 / M31).